The sequence spans 368 residues: Histidinol-phosphate aminotransferase (368 aa).

Lys223 carries the N6-(pyridoxal phosphate)lysine modification.

Belongs to the class-II pyridoxal-phosphate-dependent aminotransferase family. Histidinol-phosphate aminotransferase subfamily. In terms of assembly, homodimer. The cofactor is pyridoxal 5'-phosphate.

It carries out the reaction L-histidinol phosphate + 2-oxoglutarate = 3-(imidazol-4-yl)-2-oxopropyl phosphate + L-glutamate. It functions in the pathway amino-acid biosynthesis; L-histidine biosynthesis; L-histidine from 5-phospho-alpha-D-ribose 1-diphosphate: step 7/9. This Sinorhizobium fredii (strain NBRC 101917 / NGR234) protein is Histidinol-phosphate aminotransferase (hisC).